We begin with the raw amino-acid sequence, 496 residues long: 3-octaprenyl-4-hydroxybenzoate carboxy-lyase (496 aa).

N181 lines the Mn(2+) pocket. Residues 184-186 (IYR), 198-200 (RWL), and 203-204 (RG) each bind prenylated FMN. E247 contributes to the Mn(2+) binding site. Residue D296 is the Proton donor of the active site.

This sequence belongs to the UbiD family. As to quaternary structure, homohexamer. Prenylated FMN serves as cofactor. The cofactor is Mn(2+).

The protein resides in the cell membrane. It carries out the reaction a 4-hydroxy-3-(all-trans-polyprenyl)benzoate + H(+) = a 2-(all-trans-polyprenyl)phenol + CO2. It functions in the pathway cofactor biosynthesis; ubiquinone biosynthesis. Functionally, catalyzes the decarboxylation of 3-octaprenyl-4-hydroxy benzoate to 2-octaprenylphenol, an intermediate step in ubiquinone biosynthesis. The chain is 3-octaprenyl-4-hydroxybenzoate carboxy-lyase from Aromatoleum aromaticum (strain DSM 19018 / LMG 30748 / EbN1) (Azoarcus sp. (strain EbN1)).